The primary structure comprises 1549 residues: Structural maintenance of chromosomes protein 4 (1549 aa).

The disordered stretch occupies residues 1-78 (MPPKTSAAPP…LFSLQLPSRP (78 aa)). Over residues 26 to 36 (KPQKKTTKPVN) the composition is skewed to basic residues. The span at 37–59 (RHKEGSKDPEEELQRAVNEKFDG) shows a compositional bias: basic and acidic residues. ATP is bound at residue 121–128 (GPNGSGKS). Residues 326 to 604 (MKLEQRRRQR…QNSSCSSSNK (279 aa)) are a coiled coil. 2 stretches are compositionally biased toward basic and acidic residues: residues 396–407 (LSDLGTEETRRK) and 420–444 (AEAEKEKEVKKRSNLEAAPEKAERK). Disordered stretches follow at residues 396 to 444 (LSDL…AERK) and 460 to 485 (KTANEEADKNLDEFEKRSEAPKEEQK). Positions 619 to 734 (KSFHGRLGDL…GDSTQEAQRM (116 aa)) constitute an SMC hinge domain. Coiled coils occupy residues 786 to 1058 (KAAE…KVNR) and 1144 to 1182 (EKINEISSRDAEEMQMKLKVCEQQVEALKAKVDISSIKA). The segment covering 1440-1459 (IQTTRDVTSRPQSKATTSGD) has biased composition (polar residues). Residues 1440–1549 (IQTTRDVTSR…AIVDDDDDME (110 aa)) form a disordered region. The segment covering 1460–1474 (GTERPASRSASRPES) has biased composition (basic and acidic residues). The segment covering 1510–1523 (TPPSKRSNSASTPK) has biased composition (polar residues).

This sequence belongs to the SMC family. SMC4 subfamily. Component of the condensin I complex, which contains the mix-1/SMC2 and smc-4/SMC4 heterodimer, and three non SMC subunits that probably regulate the complex: dpy-26, capg-1 and dpy-28. Within the complex, interacts with mix-1, dpy-26, capg-1 and dpy-28. Component of the condensin II complex, which contains the mix-1/SMC2 and smc-4/SMC4 heterodimer, and three non SMC subunits, kle-2, capg-2 and hcp-6 that probably regulate the complex. Within the complex, interacts with mix-1, kle-2, capg-2 and hcp-6. Interacts with smcl-1.

Its subcellular location is the nucleus. It localises to the chromosome. Functionally, central component of the condensin I complex, a complex required for conversion of interphase chromatin into mitotic-like condense chromosomes. The condensin I complex introduces positive supercoils into relaxed DNA in the presence of type I topoisomerases. Converts nicked DNA into positive knotted forms in the presence of type II topoisomerases. Also a central component of the condensin II complex, a complex that seems to play a role in prophase chromosome condensation. Both the condensin complex I and II play a role in meiotic and mitotic chromosome segregation. Plays a role in robust cytokinesis upon the presence of chromatin obstructions. This chain is Structural maintenance of chromosomes protein 4 (smc-4), found in Caenorhabditis elegans.